The sequence spans 295 residues: MVTIDMRNDATLMESRRKKQAWRRQKNRIALVLSMATMLFGLFWLIWILFSTVTKGIDGMSLALFTEMTPPPNTAGGGLANAIAGSGLLILWATVIGTPLGIMAGIYLAEYGRKSWLAEVTRFINDILLSAPSIVVGLFVYTIVVAKMEHFSGWAGVIALALLQVPIVIRTTENMLKLVPDSLREAAYALGTPKWRMISAITLKASVSGILTGILLAIARIAGETAPLLFTSLSNQFWSTDLTRPIANLPVTIFKFAMSPFAEWQNLAWAGVLLITLCVLLLNILARVIFAKKKH.

6 consecutive transmembrane segments (helical) span residues 29–49, 88–108, 126–146, 149–169, 198–218, and 266–286; these read IALV…IWIL, LLIL…GIYL, DILL…IVVA, EHFS…PIVI, ISAI…LLAI, and NLAW…NILA. The region spanning 83–286 is the ABC transmembrane type-1 domain; that stretch reads IAGSGLLILW…LCVLLLNILA (204 aa).

The protein belongs to the binding-protein-dependent transport system permease family. CysTW subfamily.

It is found in the cell inner membrane. In terms of biological role, part of a binding-protein-dependent transport system for phosphate; probably responsible for the translocation of the substrate across the membrane. This is Phosphate transport system permease protein PstA (pstA) from Yersinia pestis.